The chain runs to 267 residues: Large ribosomal subunit protein uL4 (267 aa).

It belongs to the universal ribosomal protein uL4 family. Part of the 50S ribosomal subunit.

One of the primary rRNA binding proteins, this protein initially binds near the 5'-end of the 23S rRNA. It is important during the early stages of 50S assembly. It makes multiple contacts with different domains of the 23S rRNA in the assembled 50S subunit and ribosome. Functionally, forms part of the polypeptide exit tunnel. This Saccharolobus islandicus (strain Y.N.15.51 / Yellowstone #2) (Sulfolobus islandicus) protein is Large ribosomal subunit protein uL4.